Reading from the N-terminus, the 406-residue chain is NADH-ubiquinone oxidoreductase 49 kDa subunit (406 aa).

This sequence belongs to the complex I 49 kDa subunit family. Complex I is composed of 45 different subunits. Component of the iron-sulfur (IP) fragment of the enzyme.

It localises to the mitochondrion inner membrane. The enzyme catalyses a ubiquinone + NADH + 5 H(+)(in) = a ubiquinol + NAD(+) + 4 H(+)(out). In terms of biological role, core subunit of the mitochondrial membrane respiratory chain NADH dehydrogenase (Complex I) that is believed to belong to the minimal assembly required for catalysis. Complex I functions in the transfer of electrons from NADH to the respiratory chain. The immediate electron acceptor for the enzyme is believed to be ubiquinone. The polypeptide is NADH-ubiquinone oxidoreductase 49 kDa subunit (nad7) (Dictyostelium discoideum (Social amoeba)).